The primary structure comprises 341 residues: Anthranilate phosphoribosyltransferase (341 aa).

5-phospho-alpha-D-ribose 1-diphosphate is bound by residues glycine 84, 87–88, threonine 92, 94–97, 112–120, and serine 124; these read GD, NVTT, and KCGNRSVSS. Position 84 (glycine 84) interacts with anthranilate. Threonine 96 contacts Mg(2+). Asparagine 115 contributes to the anthranilate binding site. Arginine 170 serves as a coordination point for anthranilate. 2 residues coordinate Mg(2+): aspartate 228 and glutamate 229.

It belongs to the anthranilate phosphoribosyltransferase family. As to quaternary structure, homodimer. Requires Mg(2+) as cofactor.

It carries out the reaction N-(5-phospho-beta-D-ribosyl)anthranilate + diphosphate = 5-phospho-alpha-D-ribose 1-diphosphate + anthranilate. It participates in amino-acid biosynthesis; L-tryptophan biosynthesis; L-tryptophan from chorismate: step 2/5. Functionally, catalyzes the transfer of the phosphoribosyl group of 5-phosphorylribose-1-pyrophosphate (PRPP) to anthranilate to yield N-(5'-phosphoribosyl)-anthranilate (PRA). This chain is Anthranilate phosphoribosyltransferase, found in Corynebacterium diphtheriae (strain ATCC 700971 / NCTC 13129 / Biotype gravis).